Reading from the N-terminus, the 72-residue chain is Translational regulator CsrA (72 aa).

This sequence belongs to the CsrA/RsmA family. In terms of assembly, homodimer; the beta-strands of each monomer intercalate to form a hydrophobic core, while the alpha-helices form wings that extend away from the core.

The protein resides in the cytoplasm. Its function is as follows. A translational regulator that binds mRNA to regulate translation initiation and/or mRNA stability. Usually binds in the 5'-UTR at or near the Shine-Dalgarno sequence preventing ribosome-binding, thus repressing translation. Its main target seems to be the major flagellin gene, while its function is anatagonized by FliW. The protein is Translational regulator CsrA of Lachnoclostridium phytofermentans (strain ATCC 700394 / DSM 18823 / ISDg) (Clostridium phytofermentans).